We begin with the raw amino-acid sequence, 156 residues long: SsrA-binding protein (156 aa).

This sequence belongs to the SmpB family.

The protein localises to the cytoplasm. Required for rescue of stalled ribosomes mediated by trans-translation. Binds to transfer-messenger RNA (tmRNA), required for stable association of tmRNA with ribosomes. tmRNA and SmpB together mimic tRNA shape, replacing the anticodon stem-loop with SmpB. tmRNA is encoded by the ssrA gene; the 2 termini fold to resemble tRNA(Ala) and it encodes a 'tag peptide', a short internal open reading frame. During trans-translation Ala-aminoacylated tmRNA acts like a tRNA, entering the A-site of stalled ribosomes, displacing the stalled mRNA. The ribosome then switches to translate the ORF on the tmRNA; the nascent peptide is terminated with the 'tag peptide' encoded by the tmRNA and targeted for degradation. The ribosome is freed to recommence translation, which seems to be the essential function of trans-translation. The chain is SsrA-binding protein from Bacillus pumilus (strain SAFR-032).